The sequence spans 98 residues: uncharacterized protein (98 aa).

Belongs to the HesB/IscA family.

This is an uncharacterized protein from Staphylococcus saprophyticus subsp. saprophyticus (strain ATCC 15305 / DSM 20229 / NCIMB 8711 / NCTC 7292 / S-41).